The sequence spans 445 residues: Ribosomal protein uS12 methylthiotransferase RimO (445 aa).

Residues 4–119 (IKVALVSLGC…LLESIKVFLK (116 aa)) form the MTTase N-terminal domain. Residues C13, C48, C82, C156, C160, and C163 each contribute to the [4Fe-4S] cluster site. Positions 142–372 (TTPTYTAYVR…MILQQSISKD (231 aa)) constitute a Radical SAM core domain. Residues 375–441 (KEKIGKIYEV…EYDLIGVVYN (67 aa)) form the TRAM domain.

Belongs to the methylthiotransferase family. RimO subfamily. [4Fe-4S] cluster serves as cofactor.

It is found in the cytoplasm. The enzyme catalyses L-aspartate(89)-[ribosomal protein uS12]-hydrogen + (sulfur carrier)-SH + AH2 + 2 S-adenosyl-L-methionine = 3-methylsulfanyl-L-aspartate(89)-[ribosomal protein uS12]-hydrogen + (sulfur carrier)-H + 5'-deoxyadenosine + L-methionine + A + S-adenosyl-L-homocysteine + 2 H(+). Its function is as follows. Catalyzes the methylthiolation of an aspartic acid residue of ribosomal protein uS12. This is Ribosomal protein uS12 methylthiotransferase RimO from Clostridium botulinum (strain Langeland / NCTC 10281 / Type F).